Reading from the N-terminus, the 226-residue chain is CRISPR-associated protein Cas5 (226 aa).

It belongs to the CRISPR-associated protein Cas5 family. Subtype I-A/Apern subfamily. As to quaternary structure, can form a Cascade complex with Csa5, Cas7, Cas3, Cas3' and Cas8a2.

Its function is as follows. CRISPR (clustered regularly interspaced short palindromic repeat) is an adaptive immune system that provides protection against mobile genetic elements (viruses, transposable elements and conjugative plasmids). CRISPR clusters contain spacers, sequences complementary to antecedent mobile elements, and target invading nucleic acids. CRISPR clusters are transcribed and processed into CRISPR RNA (crRNA). The sequence is that of CRISPR-associated protein Cas5 (cas5a) from Thermoproteus tenax (strain ATCC 35583 / DSM 2078 / JCM 9277 / NBRC 100435 / Kra 1).